A 20-amino-acid chain; its full sequence is Cytochrome c oxidase subunit 5A-1, mitochondrial (20 aa).

This sequence belongs to the cytochrome c oxidase subunit 5A family. In terms of assembly, component of the cytochrome c oxidase (complex IV, CIV), a multisubunit enzyme composed of 14 subunits. The complex is composed of a catalytic core of 3 subunits MT-CO1, MT-CO2 and MT-CO3, encoded in the mitochondrial DNA, and 11 supernumerary subunits COX4I, COX5A, COX5B, COX6A, COX6B, COX6C, COX7A, COX7B, COX7C, COX8 and NDUFA4, which are encoded in the nuclear genome. The complex exists as a monomer or a dimer and forms supercomplexes (SCs) in the inner mitochondrial membrane with NADH-ubiquinone oxidoreductase (complex I, CI) and ubiquinol-cytochrome c oxidoreductase (cytochrome b-c1 complex, complex III, CIII), resulting in different assemblies (supercomplex SCI(1)III(2)IV(1) and megacomplex MCI(2)III(2)IV(2)). Interacts with AFG1L. Interacts with RAB5IF.

It localises to the mitochondrion inner membrane. It participates in energy metabolism; oxidative phosphorylation. Its function is as follows. Component of the cytochrome c oxidase, the last enzyme in the mitochondrial electron transport chain which drives oxidative phosphorylation. The respiratory chain contains 3 multisubunit complexes succinate dehydrogenase (complex II, CII), ubiquinol-cytochrome c oxidoreductase (cytochrome b-c1 complex, complex III, CIII) and cytochrome c oxidase (complex IV, CIV), that cooperate to transfer electrons derived from NADH and succinate to molecular oxygen, creating an electrochemical gradient over the inner membrane that drives transmembrane transport and the ATP synthase. Cytochrome c oxidase is the component of the respiratory chain that catalyzes the reduction of oxygen to water. Electrons originating from reduced cytochrome c in the intermembrane space (IMS) are transferred via the dinuclear copper A center (CU(A)) of subunit 2 and heme A of subunit 1 to the active site in subunit 1, a binuclear center (BNC) formed by heme A3 and copper B (CU(B)). The BNC reduces molecular oxygen to 2 water molecules using 4 electrons from cytochrome c in the IMS and 4 protons from the mitochondrial matrix. This chain is Cytochrome c oxidase subunit 5A-1, mitochondrial, found in Thunnus obesus (Bigeye tuna).